A 159-amino-acid chain; its full sequence is uncharacterized protein (159 aa).

A helical membrane pass occupies residues 4–24 (QIALILSLIILIFFIYKFAMF).

The protein localises to the membrane. This is an uncharacterized protein from Acheta domesticus (House cricket).